Here is a 182-residue protein sequence, read N- to C-terminus: Adenine phosphoribosyltransferase (182 aa).

133 to 137 (ATGGS) serves as a coordination point for AMP.

The protein belongs to the purine/pyrimidine phosphoribosyltransferase family. In terms of assembly, homodimer. It depends on Mg(2+) as a cofactor.

Its subcellular location is the cytoplasm. The protein resides in the nucleus. It carries out the reaction AMP + diphosphate = 5-phospho-alpha-D-ribose 1-diphosphate + adenine. It functions in the pathway purine metabolism; AMP biosynthesis via salvage pathway; AMP from adenine: step 1/1. In terms of biological role, catalyzes a salvage reaction resulting in the formation of AMP, that is energically less costly than de novo synthesis. This chain is Adenine phosphoribosyltransferase (APT1), found in Yarrowia lipolytica (strain CLIB 122 / E 150) (Yeast).